Consider the following 568-residue polypeptide: MDQDALISKEDSEVEREASGGRESLSDVIGFLDAVLSSEPTDIGGDRSWLHNTINTLQRPGSTHRVKGEGEGEVSTSSTQDNRSGEESRVSGGTSEPEAEAHARNVDKQNIHWATGRGASTDSVPQDLGNGRDSGILEDPPNEGGYPRSGAEDENREMAANPDKRGEDQAEGLPEEIRRSAPLPDEREGRADNNGRGVEPGSPHSARVTGVLVIPSPELEEAVLQRNKRRPANSGSRSLTPVVVPSTRSPPPDHDNSTRSPPRKPPTTQDEHTNPRNTPAVRIKDRRPPTGTRSAPDRPTDGYPTHPSPETDATKKGIEENTSSMKEMATLLTSLGVIQSAQEFESSRDASYVFAKRALKSANYAEMAFNVCGLILSAEKSFANRVDENKQLLKQIQESVESFRDIYKRFSEYQKEQNSLLMSNLSTLHIITDRGGKTDNPDSPTRSPSVFAKTKENKTKATRFDPSMETMGDMRYKPDLLREDEFREEIRNPVYQERDTEPRASNASRLLPSREKPTIHSLKLVIESSPLSRAEKAAYVKSLSKCKTDQEVKAVMELVEEDIESLTN.

The tract at residues 1-23 (MDQDALISKEDSEVEREASGGRE) is disordered. Residues 7–20 (ISKEDSEVEREASG) are compositionally biased toward basic and acidic residues. Positions 33 to 41 (DAVLSSEPT) are N0 binding. The interval 54-317 (INTLQRPGST…SPETDATKKG (264 aa)) is disordered. Basic and acidic residues-rich tracts occupy residues 99–110 (AEAHARNVDKQN), 150–168 (GAEDENREMAANPDKRGED), and 175–193 (EEIRRSAPLPDEREGRADN). Residues S249, S257, and S260 each carry the phosphoserine; by host modification. The segment at 344 to 411 (FESSRDASYV…SFRDIYKRFS (68 aa)) is multimerization. A coiled-coil region spans residues 364–429 (YAEMAFNVCG…LLMSNLSTLH (66 aa)). The l protein binding stretch occupies residues 412-445 (EYQKEQNSLLMSNLSTLHIITDRGGKTDNPDSPT). The segment at 433–462 (DRGGKTDNPDSPTRSPSVFAKTKENKTKAT) is disordered. A phosphoserine; by host mark is found at S447 and S449. Over residues 453 to 462 (KTKENKTKAT) the composition is skewed to basic and acidic residues. An interaction with the nucleocapsid (N-RNA) region spans residues 479–568 (DLLREDEFRE…VEEDIESLTN (90 aa)).

This sequence belongs to the respirovirus P protein family. Homotetramer. Interacts (via multimerization domain) with polymerase L; this interaction forms the polymerase complex. Interacts (via N-terminus) with N0; this interaction allows P to chaperon N0 before encapsidation and form the N-P complex. Interacts (via C-terminus) with N-RNA template; this interaction positions the polymerase on the template. In terms of processing, phosphorylated by PKC/PRKCZ, and other unknown kinases. Phosphorylation is necessary for viral transcription and replication. The N-terminus contains the majority of phosphorylated sites. Ser-249 is the major site of phosphorylation, but is not necessary for most functions.

Its subcellular location is the host cytoplasm. In terms of biological role, essential cofactor of the RNA polymerase L that plays a central role in the transcription and replication by forming the polymerase complex with RNA polymerase L and recruiting L to the genomic N-RNA template for RNA synthesis. Also plays a central role in the encapsidation of nascent RNA chains by forming the encapsidation complex with the nucleocapsid protein N (N-P complex). Acts as a chaperone for newly synthesized free N protein, so-called N0, allowing encapsidation of nascent RNA chains during replication. The nucleoprotein protein N prevents excessive phosphorylation of P, which leads to down-regulation of viral transcription/ replication. Participates, together with N, in the formation of viral factories (viroplasms), which are large inclusions in the host cytoplasm where replication takes place. Recruits host PI4KB and remodel the host endoplasmic reticulum membrane to form viral replication factories. The protein is Phosphoprotein (P/V/C) of Sendai virus (strain Ohita) (SeV).